The sequence spans 1210 residues: A disintegrin and metalloproteinase with thrombospondin motifs 19 (1210 aa).

The N-terminal stretch at Met-1–Gly-30 is a signal peptide. The propeptide occupies Leu-31–Arg-319. Asn-54 is a glycosylation site (N-linked (GlcNAc...) asparagine). Residues Ala-55–Glu-166 form a disordered region. Residues Arg-69–Gln-78 are compositionally biased toward gly residues. Basic and acidic residues predominate over residues Arg-84–Thr-98. Residues Gly-113–Ser-122 are compositionally biased toward acidic residues. Residues Ser-130 to Thr-139 show a composition bias toward polar residues. Over residues Trp-143–Ala-158 the composition is skewed to pro residues. Asn-263 carries an N-linked (GlcNAc...) asparagine glycan. The Cysteine switch motif lies at His-295–Asp-302. Residue Cys-297 coordinates Zn(2+). Residues Tyr-328 to Asp-548 form the Peptidase M12B domain. 11 disulfides stabilise this stretch: Cys-404/Cys-469, Cys-444/Cys-451, Cys-463/Cys-543, Cys-502/Cys-527, Cys-572/Cys-596, Cys-583/Cys-604, Cys-591/Cys-623, Cys-617/Cys-628, Cys-648/Cys-683, Cys-652/Cys-688, and Cys-663/Cys-673. Residue His-485 participates in Zn(2+) binding. Glu-486 is an active-site residue. Residues His-489 and His-495 each coordinate Zn(2+). The 88-residue stretch at Pro-549–Glu-636 folds into the Disintegrin domain. The region spanning His-637 to Pro-689 is the TSP type-1 1 domain. The interval Val-794–Gly-917 is spacer. 5 N-linked (GlcNAc...) asparagine glycosylation sites follow: Asn-800, Asn-910, Asn-931, Asn-952, and Asn-1012. TSP type-1 domains are found at residues Pro-918–Pro-978, Cys-979–Met-1040, Val-1042–Glu-1086, and Lys-1090–Asn-1147. 3 cysteine pairs are disulfide-bonded: Cys-991-Cys-1034, Cys-995-Cys-1039, and Cys-1006-Cys-1023. A PLAC domain is found at Leu-1163–Tyr-1202.

Zn(2+) serves as cofactor. The precursor is cleaved by a furin endopeptidase. In terms of processing, glycosylated. Can be O-fucosylated by POFUT2 on a serine or a threonine residue found within the consensus sequence C1-X(2)-(S/T)-C2-G of the TSP type-1 repeat domains where C1 and C2 are the first and second cysteine residue of the repeat, respectively. Fucosylated repeats can then be further glycosylated by the addition of a beta-1,3-glucose residue by the glucosyltransferase, B3GALTL. Fucosylation mediates the efficient secretion of ADAMTS family members. Can also be C-glycosylated with one or two mannose molecules on tryptophan residues within the consensus sequence W-X-X-W of the TPRs, and N-glycosylated. These other glycosylations can also facilitate secretion. As to expression, expressed predominantly in fetal ovary, low levels of expression is also detected in kidney, heart, skeletal muscle, lung and testis.

It localises to the secreted. The protein resides in the extracellular space. The protein localises to the extracellular matrix. This is A disintegrin and metalloproteinase with thrombospondin motifs 19 (Adamts19) from Mus musculus (Mouse).